Reading from the N-terminus, the 318-residue chain is Deoxyhypusine hydroxylase (318 aa).

HEAT-like PBS-type repeat units lie at residues Leu-70–Asn-96 and Val-103–Glu-129. 8 residues coordinate Fe cation: His-72, Glu-73, His-105, Glu-106, His-231, Glu-232, His-264, and Glu-265. One copy of the HEAT-like PBS-type 3 repeat lies at Val-262–Asp-288.

The protein belongs to the deoxyhypusine hydroxylase family. The cofactor is Fe(2+).

Its subcellular location is the cytoplasm. The protein localises to the nucleus. It carries out the reaction [eIF5A protein]-deoxyhypusine + AH2 + O2 = [eIF5A protein]-hypusine + A + H2O. Its pathway is protein modification; eIF5A hypusination. In terms of biological role, catalyzes the hydroxylation of the N(6)-(4-aminobutyl)-L-lysine intermediate to form hypusine, an essential post-translational modification only found in mature eIF-5A factor. The protein is Deoxyhypusine hydroxylase of Candida albicans (strain SC5314 / ATCC MYA-2876) (Yeast).